We begin with the raw amino-acid sequence, 276 residues long: Dermonecrotic toxin LarSicTox-alphaIB2c (276 aa).

H5 is a catalytic residue. Residues E25 and D27 each coordinate Mg(2+). H41 serves as the catalytic Nucleophile. 2 disulfide bridges follow: C45–C51 and C47–C190. Residue D85 participates in Mg(2+) binding. N253 carries an N-linked (GlcNAc...) asparagine glycan.

It belongs to the arthropod phospholipase D family. Class II subfamily. Mg(2+) is required as a cofactor. In terms of tissue distribution, expressed by the venom gland.

The protein resides in the secreted. The enzyme catalyses an N-(acyl)-sphingosylphosphocholine = an N-(acyl)-sphingosyl-1,3-cyclic phosphate + choline. It carries out the reaction an N-(acyl)-sphingosylphosphoethanolamine = an N-(acyl)-sphingosyl-1,3-cyclic phosphate + ethanolamine. The catalysed reaction is a 1-acyl-sn-glycero-3-phosphocholine = a 1-acyl-sn-glycero-2,3-cyclic phosphate + choline. It catalyses the reaction a 1-acyl-sn-glycero-3-phosphoethanolamine = a 1-acyl-sn-glycero-2,3-cyclic phosphate + ethanolamine. Its function is as follows. Dermonecrotic toxins cleave the phosphodiester linkage between the phosphate and headgroup of certain phospholipids (sphingolipid and lysolipid substrates), forming an alcohol (often choline) and a cyclic phosphate. This toxin acts on sphingomyelin (SM). It may also act on ceramide phosphoethanolamine (CPE), lysophosphatidylcholine (LPC) and lysophosphatidylethanolamine (LPE), but not on lysophosphatidylserine (LPS), and lysophosphatidylglycerol (LPG). It acts by transphosphatidylation, releasing exclusively cyclic phosphate products as second products. Induces dermonecrosis, hemolysis, increased vascular permeability, edema, inflammatory response, and platelet aggregation. The chain is Dermonecrotic toxin LarSicTox-alphaIB2c from Loxosceles arizonica (Arizona brown spider).